Here is a 462-residue protein sequence, read N- to C-terminus: Asparagine--tRNA ligase (462 aa).

It belongs to the class-II aminoacyl-tRNA synthetase family. As to quaternary structure, homodimer.

It is found in the cytoplasm. It carries out the reaction tRNA(Asn) + L-asparagine + ATP = L-asparaginyl-tRNA(Asn) + AMP + diphosphate + H(+). This chain is Asparagine--tRNA ligase, found in Synechocystis sp. (strain ATCC 27184 / PCC 6803 / Kazusa).